The primary structure comprises 345 residues: Phosphoribosylformylglycinamidine cyclo-ligase (345 aa).

The protein belongs to the AIR synthase family.

Its subcellular location is the cytoplasm. It carries out the reaction 2-formamido-N(1)-(5-O-phospho-beta-D-ribosyl)acetamidine + ATP = 5-amino-1-(5-phospho-beta-D-ribosyl)imidazole + ADP + phosphate + H(+). The protein operates within purine metabolism; IMP biosynthesis via de novo pathway; 5-amino-1-(5-phospho-D-ribosyl)imidazole from N(2)-formyl-N(1)-(5-phospho-D-ribosyl)glycinamide: step 2/2. In Shewanella loihica (strain ATCC BAA-1088 / PV-4), this protein is Phosphoribosylformylglycinamidine cyclo-ligase.